The following is a 144-amino-acid chain: MWLQGLLLLGTVACSISAPARSPSPGTQPWEHVNAIQEARRLLNLSRDTAAEMNKTVEVVSEMFDLQEPSCLQTRLELYKQGLQGSLTKLKGPLTMMASHYKQHCPPTPETSCATQMITFQSFKENLKDFLLVIPFDCWEPVQE.

A signal peptide spans 1 to 17; that stretch reads MWLQGLLLLGTVACSIS. Residue S24 is glycosylated (O-linked (GalNAc...) serine). T27 carries O-linked (GalNAc...) threonine glycosylation. N-linked (GlcNAc...) asparagine glycosylation is found at N44 and N54. Cystine bridges form between C71/C113 and C105/C138.

This sequence belongs to the GM-CSF family. Monomer. The signaling GM-CSF receptor complex is a dodecamer of two head-to-head hexamers of two alpha, two beta, and two ligand subunits.

It localises to the secreted. Functionally, cytokine that stimulates the growth and differentiation of hematopoietic precursor cells from various lineages, including granulocytes, macrophages, eosinophils and erythrocytes. The sequence is that of Granulocyte-macrophage colony-stimulating factor (CSF2) from Chlorocebus aethiops (Green monkey).